Here is a 295-residue protein sequence, read N- to C-terminus: UDP-N-acetylenolpyruvoylglucosamine reductase (295 aa).

An FAD-binding PCMH-type domain is found at 26–189 (VGGRADILFK…VEAEFKGVNS (164 aa)). Residue arginine 169 is part of the active site. Cysteine 218 (proton donor) is an active-site residue. Glutamate 288 is an active-site residue.

Belongs to the MurB family. FAD is required as a cofactor.

Its subcellular location is the cytoplasm. The catalysed reaction is UDP-N-acetyl-alpha-D-muramate + NADP(+) = UDP-N-acetyl-3-O-(1-carboxyvinyl)-alpha-D-glucosamine + NADPH + H(+). It participates in cell wall biogenesis; peptidoglycan biosynthesis. Its function is as follows. Cell wall formation. The polypeptide is UDP-N-acetylenolpyruvoylglucosamine reductase (Wolbachia sp. subsp. Drosophila simulans (strain wRi)).